Reading from the N-terminus, the 212-residue chain is Ferric nitrobindin-like protein (212 aa).

Basic and acidic residues predominate over residues 1–11 (MTSSDQPERGS). A disordered region spans residues 1-36 (MTSSDQPERGSGDAAVQAAAERAEQTRGRNVPQFDD). Residues 64 to 70 (GVWRGDG) carry the GXWXGXG motif.

It belongs to the nitrobindin family.

In Saccharopolyspora erythraea (strain ATCC 11635 / DSM 40517 / JCM 4748 / NBRC 13426 / NCIMB 8594 / NRRL 2338), this protein is Ferric nitrobindin-like protein.